The following is a 310-amino-acid chain: MTDIRITEVPREAGFGDYFALLKPRVMSLVVFTALVGLLVAPATVHPMIALTGILFIALGAGASGALNMWWDADIDRVMKRTRNRPVPAGVVQPGEALGLGLALSGIAVVMLGLATNLFAAGLLAFTIFFYAVVYSMWLKRTTPQNIVIGGAAGAFPPMIGWAVATGGVSLESLFMFALIFMWTPPHFWSLALFMKTDYSDAGVPMLTVTHGRRVTRGHVLAYALLLAPLAVAGAFTGIGGPLYLVVALALNGWLLRGAVRIWRRDEAEAEADRYRTEKGFFRFSLYYLFLHFGAILAEAALKPYGLGGW.

9 consecutive transmembrane segments (helical) span residues 26–46 (VMSL…ATVH), 47–67 (PMIA…SGAL), 95–115 (GEAL…LGLA), 118–138 (LFAA…YSMW), 147–167 (IVIG…VATG), 174–194 (LFMF…LALF), 220–240 (VLAY…TGIG), 243–263 (LYLV…VRIW), and 281–301 (FFRF…AEAA).

This sequence belongs to the UbiA prenyltransferase family. Protoheme IX farnesyltransferase subfamily. As to quaternary structure, interacts with CtaA.

Its subcellular location is the cell inner membrane. The enzyme catalyses heme b + (2E,6E)-farnesyl diphosphate + H2O = Fe(II)-heme o + diphosphate. Its pathway is porphyrin-containing compound metabolism; heme O biosynthesis; heme O from protoheme: step 1/1. Functionally, converts heme B (protoheme IX) to heme O by substitution of the vinyl group on carbon 2 of heme B porphyrin ring with a hydroxyethyl farnesyl side group. This Cereibacter sphaeroides (strain ATCC 17025 / ATH 2.4.3) (Rhodobacter sphaeroides) protein is Protoheme IX farnesyltransferase.